A 236-amino-acid polypeptide reads, in one-letter code: Ribosome maturation protein SDO1 homolog (236 aa).

Belongs to the SDO1/SBDS family. As to quaternary structure, crystallized in association with 70S ribosomes.

The chain is Ribosome maturation protein SDO1 homolog from Thermococcus kodakarensis (strain ATCC BAA-918 / JCM 12380 / KOD1) (Pyrococcus kodakaraensis (strain KOD1)).